The following is a 426-amino-acid chain: D-tagatose-1,6-bisphosphate aldolase subunit KbaZ (426 aa).

It belongs to the GatZ/KbaZ family. KbaZ subfamily. Forms a complex with KbaY.

The protein operates within carbohydrate metabolism; D-tagatose 6-phosphate degradation; D-glyceraldehyde 3-phosphate and glycerone phosphate from D-tagatose 6-phosphate: step 2/2. Its function is as follows. Component of the tagatose-1,6-bisphosphate aldolase KbaYZ that is required for full activity and stability of the Y subunit. Could have a chaperone-like function for the proper and stable folding of KbaY. When expressed alone, KbaZ does not show any aldolase activity. This is D-tagatose-1,6-bisphosphate aldolase subunit KbaZ from Escherichia coli O6:H1 (strain CFT073 / ATCC 700928 / UPEC).